The chain runs to 1416 residues: DNA-directed RNA polymerase subunit beta' (1416 aa).

Cys71, Cys73, Cys86, and Cys89 together coordinate Zn(2+). Mg(2+)-binding residues include Asp461, Asp463, and Asp465. The Zn(2+) site is built by Cys815, Cys889, Cys896, and Cys899.

This sequence belongs to the RNA polymerase beta' chain family. The RNAP catalytic core consists of 2 alpha, 1 beta, 1 beta' and 1 omega subunit. When a sigma factor is associated with the core the holoenzyme is formed, which can initiate transcription. Mg(2+) is required as a cofactor. It depends on Zn(2+) as a cofactor.

It catalyses the reaction RNA(n) + a ribonucleoside 5'-triphosphate = RNA(n+1) + diphosphate. Its function is as follows. DNA-dependent RNA polymerase catalyzes the transcription of DNA into RNA using the four ribonucleoside triphosphates as substrates. This Haemophilus influenzae (strain PittGG) protein is DNA-directed RNA polymerase subunit beta'.